Consider the following 444-residue polypeptide: Trigger factor (444 aa).

The PPIase FKBP-type domain occupies 166–251 (GDQVVIDFKG…VKAVKAPKAA (86 aa)).

Belongs to the FKBP-type PPIase family. Tig subfamily.

The protein localises to the cytoplasm. The enzyme catalyses [protein]-peptidylproline (omega=180) = [protein]-peptidylproline (omega=0). Functionally, involved in protein export. Acts as a chaperone by maintaining the newly synthesized protein in an open conformation. Functions as a peptidyl-prolyl cis-trans isomerase. This is Trigger factor from Cereibacter sphaeroides (strain KD131 / KCTC 12085) (Rhodobacter sphaeroides).